The following is a 1179-amino-acid chain: Protein FAM83H (1179 aa).

Residues 1 to 286 (MARRSQSSSQ…LFAQSEPLVP (286 aa)) form a DUF1669 region. The interval 1–286 (MARRSQSSSQ…LFAQSEPLVP (286 aa)) is mediates interaction with CSNK1A1 and is required for FAM83H activity in keratin cytoskeleton organization. Thr465 bears the Phosphothreonine mark. Disordered regions lie at residues 484–577 (ADPD…GRAG) and 636–669 (FPTK…DSFR). A phosphoserine mark is found at Ser513, Ser514, Ser516, Ser523, Ser647, and Ser667. Thr756 carries the post-translational modification Phosphothreonine. Phosphoserine occurs at positions 759, 785, and 813. The segment at 830–1026 (RLPSRFLSAQ…RGPRARLSSA (197 aa)) is disordered. Residues 836–847 (LSAQSHSTSPQG) are compositionally biased toward polar residues. 2 positions are modified to phosphoserine: Ser870 and Ser881. Residue Thr883 is modified to Phosphothreonine. Polar residues predominate over residues 884–906 (PGFSTRRGSPTTGFIEQKGSPTS). At Ser892 the chain carries Phosphoserine. At Thr894 the chain carries Phosphothreonine. 9 positions are modified to phosphoserine: Ser903, Ser914, Ser925, Ser936, Ser945, Ser1003, Ser1009, Ser1024, and Ser1025. Thr1040 is modified (phosphothreonine). 2 disordered regions span residues 1047–1084 (ISAH…APDM) and 1143–1165 (EEAS…SKVG). A phosphoserine mark is found at Ser1048, Ser1068, and Ser1147.

The protein belongs to the FAM83 family. As to quaternary structure, directly interacts (via DUF1669) with casein kinase isoforms CSNK1A1, CSNK1A1L, CSNK1D and CSNK1E. Interaction with CSNK1A1 recruits CSNK1A1 to keratin filaments. Interacts with KRT18 and probably other keratins. Expressed in the tooth follicle.

The protein localises to the cytoplasm. It localises to the cytoskeleton. Its function is as follows. May play a major role in the structural organization and calcification of developing enamel. May play a role in keratin cytoskeleton disassembly by recruiting CSNK1A1 to keratin filaments. Thereby, it may regulate epithelial cell migration. This is Protein FAM83H from Homo sapiens (Human).